Consider the following 186-residue polypeptide: Interferon beta (186 aa).

An N-terminal signal peptide occupies residues 1-21 (MTYRWILPMALLLCFSTTALS). Residue Y24 is modified to Phosphotyrosine. C52 and C161 form a disulfide bridge. N-linked (GlcNAc...) asparagine glycosylation is found at N101 and N136.

It belongs to the alpha/beta interferon family. Monomer.

It localises to the secreted. Its function is as follows. Type I interferon cytokine that plays a key role in the innate immune response to infection, developing tumors and other inflammatory stimuli. Signals via binding to high-affinity (IFNAR2) and low-affinity (IFNAR1) heterodimeric receptor, activating the canonical Jak-STAT signaling pathway resulting in transcriptional activation or repression of interferon-regulated genes that encode the effectors of the interferon response, such as antiviral proteins, regulators of cell proliferation and differentiation, and immunoregulatory proteins. Signals mostly via binding to a IFNAR1-IFNAR2 heterodimeric receptor, but can also function with IFNAR1 alone and independently of Jak-STAT pathways. Elicits a wide variety of responses, including antiviral and antibacterial activities, and can regulate the development of B-cells, myelopoiesis and lipopolysaccharide (LPS)-inducible production of tumor necrosis factor. Plays a role in neuronal homeostasis by regulating dopamine turnover and protecting dopaminergic neurons: acts by promoting neuronal autophagy and alpha-synuclein clearance, thereby preventing dopaminergic neuron loss. IFNB1 is more potent than interferon-alpha (IFN-alpha) in inducing the apoptotic and antiproliferative pathways required for control of tumor cell growth. The sequence is that of Interferon beta (IFNB1) from Equus caballus (Horse).